The sequence spans 466 residues: Chromosomal replication initiator protein DnaA (466 aa).

Residues 1–86 (MSLSLWQQCL…EVGTKPVTQT (86 aa)) form a domain I, interacts with DnaA modulators region. Residues 86 to 129 (TLKTPVHNVVAPTQTTTAQPQRVAPAARSGWDNVPAPAEPTYRS) form a domain II region. Residues 130 to 346 (NVNVKHTFDN…GALNRVIANA (217 aa)) are domain III, AAA+ region. Residues G174, G176, K177, and T178 each coordinate ATP. The interval 347-466 (NFTGRAITID…FSNLIRTLSS (120 aa)) is domain IV, binds dsDNA.

The protein belongs to the DnaA family. As to quaternary structure, oligomerizes as a right-handed, spiral filament on DNA at oriC.

It localises to the cytoplasm. Its function is as follows. Plays an essential role in the initiation and regulation of chromosomal replication. ATP-DnaA binds to the origin of replication (oriC) to initiate formation of the DNA replication initiation complex once per cell cycle. Binds the DnaA box (a 9 base pair repeat at the origin) and separates the double-stranded (ds)DNA. Forms a right-handed helical filament on oriC DNA; dsDNA binds to the exterior of the filament while single-stranded (ss)DNA is stabiized in the filament's interior. The ATP-DnaA-oriC complex binds and stabilizes one strand of the AT-rich DNA unwinding element (DUE), permitting loading of DNA polymerase. After initiation quickly degrades to an ADP-DnaA complex that is not apt for DNA replication. Binds acidic phospholipids. The polypeptide is Chromosomal replication initiator protein DnaA (Salmonella dublin (strain CT_02021853)).